Consider the following 456-residue polypeptide: Bifunctional protein GlmU (456 aa).

Positions 1 to 229 are pyrophosphorylase; the sequence is MYNCAIILAA…FEETMGVNSR (229 aa). Residues 8-11, Lys22, Gln73, and 78-79 each bind UDP-N-acetyl-alpha-D-glucosamine; these read LAAG and GT. Asp103 lines the Mg(2+) pocket. Residues Gly140, Glu155, Asn170, and Asn227 each contribute to the UDP-N-acetyl-alpha-D-glucosamine site. Asn227 lines the Mg(2+) pocket. The linker stretch occupies residues 230 to 250; it reads VQLAEAEKIMRNRINKIHMEN. The segment at 251 to 456 is N-acetyltransferase; that stretch reads GVTLIDHNNT…SWVYKKGLKK (206 aa). Residues Arg332 and Lys350 each coordinate UDP-N-acetyl-alpha-D-glucosamine. The active-site Proton acceptor is the His362. Positions 365 and 376 each coordinate UDP-N-acetyl-alpha-D-glucosamine. Residues 385-386, Ala422, and Arg439 contribute to the acetyl-CoA site; that span reads NY.

The protein in the N-terminal section; belongs to the N-acetylglucosamine-1-phosphate uridyltransferase family. It in the C-terminal section; belongs to the transferase hexapeptide repeat family. In terms of assembly, homotrimer. It depends on Mg(2+) as a cofactor.

It is found in the cytoplasm. It catalyses the reaction alpha-D-glucosamine 1-phosphate + acetyl-CoA = N-acetyl-alpha-D-glucosamine 1-phosphate + CoA + H(+). The enzyme catalyses N-acetyl-alpha-D-glucosamine 1-phosphate + UTP + H(+) = UDP-N-acetyl-alpha-D-glucosamine + diphosphate. The protein operates within nucleotide-sugar biosynthesis; UDP-N-acetyl-alpha-D-glucosamine biosynthesis; N-acetyl-alpha-D-glucosamine 1-phosphate from alpha-D-glucosamine 6-phosphate (route II): step 2/2. It participates in nucleotide-sugar biosynthesis; UDP-N-acetyl-alpha-D-glucosamine biosynthesis; UDP-N-acetyl-alpha-D-glucosamine from N-acetyl-alpha-D-glucosamine 1-phosphate: step 1/1. Its pathway is bacterial outer membrane biogenesis; LPS lipid A biosynthesis. In terms of biological role, catalyzes the last two sequential reactions in the de novo biosynthetic pathway for UDP-N-acetylglucosamine (UDP-GlcNAc). The C-terminal domain catalyzes the transfer of acetyl group from acetyl coenzyme A to glucosamine-1-phosphate (GlcN-1-P) to produce N-acetylglucosamine-1-phosphate (GlcNAc-1-P), which is converted into UDP-GlcNAc by the transfer of uridine 5-monophosphate (from uridine 5-triphosphate), a reaction catalyzed by the N-terminal domain. The sequence is that of Bifunctional protein GlmU from Clostridium kluyveri (strain NBRC 12016).